An 861-amino-acid chain; its full sequence is Seed linoleate 9S-lipoxygenase-3 (861 aa).

Positions 41 to 166 (QGFDILGSTV…HHKIDRIFFA (126 aa)) constitute a PLAT domain. Residues 169 to 861 (TYLPSETPAP…FRGIPNSISI (693 aa)) enclose the Lipoxygenase domain. Residues 215 to 257 (NPDSGENHARPVLGGSETYPYPRRGRTGRKPTRKDPNSESRSD) form a disordered region. Over residues 237 to 246 (RRGRTGRKPT) the composition is skewed to basic residues. Residues 247 to 257 (RKDPNSESRSD) show a composition bias toward basic and acidic residues. The Fe cation site is built by His522, His527, His713, Asn717, and Ile861.

Belongs to the lipoxygenase family. It depends on Fe cation as a cofactor.

Its subcellular location is the cytoplasm. The enzyme catalyses (9Z,12Z)-octadecadienoate + O2 = (9S)-hydroperoxy-(10E,12Z)-octadecadienoate. Its pathway is lipid metabolism; oxylipin biosynthesis. In terms of biological role, plant lipoxygenase may be involved in a number of diverse aspects of plant physiology including growth and development, pest resistance, and senescence or responses to wounding. It catalyzes the hydroperoxidation of lipids containing a cis,cis-1,4-pentadiene structure. The sequence is that of Seed linoleate 9S-lipoxygenase-3 (LOX1.3) from Pisum sativum (Garden pea).